Here is a 419-residue protein sequence, read N- to C-terminus: Protein-lysine N-methyltransferase EFM2 (419 aa).

S-adenosyl-L-methionine-binding positions include W222, 261–263 (GAG), D290, W318, and A340.

This sequence belongs to the class I-like SAM-binding methyltransferase superfamily. METTL21 family.

It is found in the cytoplasm. S-adenosyl-L-methionine-dependent protein-lysine N-methyltransferase that mono- and dimethylates elongation factor 2 (EFT1/EFT2) at 'Lys-613' and methylates elongation factor 3A (YEF3). The chain is Protein-lysine N-methyltransferase EFM2 from Saccharomyces cerevisiae (strain ATCC 204508 / S288c) (Baker's yeast).